A 147-amino-acid chain; its full sequence is Transthyretin (147 aa).

Residues Met1–Ala20 form the signal peptide. Residue Cys30 is modified to Sulfocysteine. Residue Lys35 participates in L-thyroxine binding. Glu62 is modified (4-carboxyglutamate). The residue at position 72 (Ser72) is a Phosphoserine. Glu74 is a binding site for L-thyroxine. Asn118 is a glycosylation site (N-linked (GlcNAc...) asparagine). Ser137 contributes to the L-thyroxine binding site.

Belongs to the transthyretin family. As to quaternary structure, homotetramer. Dimer of dimers. In the homotetramer, subunits assemble around a central channel that can accommodate two ligand molecules. Interacts with RBP4. Post-translationally, sulfonation of the reactive cysteine Cys-30 enhances the stability of the native conformation of TTR, avoiding misassembly of the protein leading to amyloid formation. Detected in brain.

The protein localises to the secreted. In terms of biological role, thyroid hormone-binding protein. Probably transports thyroxine from the bloodstream to the brain. The chain is Transthyretin (TTR) from Pan troglodytes (Chimpanzee).